The chain runs to 518 residues: Ell-associated factor Eaf (518 aa).

Polar residues-rich tracts occupy residues Lys119–Pro128 and Glu163–Asn182. 2 disordered regions span residues Lys119–His216 and Ala241–Asp518. Ser192 is modified (phosphoserine). Polar residues-rich tracts occupy residues Ala253 to Gly265 and Met274 to Gly284. Over residues Gln289 to Gln342 the composition is skewed to low complexity. The span at Arg343 to Met355 shows a compositional bias: polar residues. Positions Ala368–Ala377 are enriched in low complexity. Residues Glu397–Glu412 are compositionally biased toward acidic residues. 3 stretches are compositionally biased toward low complexity: residues His418–Ser428, Gln463–Gln476, and Asn500–Asp518.

This sequence belongs to the EAF family.

It is found in the nucleus. Functionally, promotes transcriptional elongation by Su(Tpl)/ELL. Essential for development. The sequence is that of Ell-associated factor Eaf from Drosophila mojavensis (Fruit fly).